A 507-amino-acid polypeptide reads, in one-letter code: DNA replication licensing factor MCM6 (507 aa).

Residues 32-239 enclose the MCM domain; that stretch reads LYHNLCTSLF…TDYAIARRIV (208 aa). 7 residues coordinate ATP: His-45, Ser-85, Thr-86, Ala-87, Lys-88, Ser-89, and Asn-190. Residues 214–217 carry the Arginine finger motif; it reads SRFD. The ADP site is built by Arg-305 and Glu-308. The residue at position 329 (Lys-329) is an N6-acetyllysine. The disordered stretch occupies residues 365–392; the sequence is GPGGINGHADSPAPVNGFNGSGEDASQE. Phosphoserine is present on residues Ser-375, Ser-390, and Ser-448. Thr-477 bears the Phosphothreonine mark.

This sequence belongs to the MCM family. As to quaternary structure, component of the MCM2-7 complex. The complex forms a toroidal hexameric ring with the proposed subunit order MCM2-MCM6-MCM4-MCM7-MCM3-MCM5. Component of the CMG helicase complex, a hexameric ring of related MCM2-7 subunits stabilized by CDC45 and the tetrameric GINS complex. May interact with MCM10. Interacts with TIPIN. Interacts with CDT1. Interacts with MCMBP. Interacts with DDI2. Post-translationally, O-glycosylated (O-GlcNAcylated), in a cell cycle-dependent manner.

It is found in the nucleus. It localises to the chromosome. It catalyses the reaction ATP + H2O = ADP + phosphate + H(+). In terms of biological role, acts as a component of the MCM2-7 complex (MCM complex) which is the replicative helicase essential for 'once per cell cycle' DNA replication initiation and elongation in eukaryotic cells. Core component of CDC45-MCM-GINS (CMG) helicase, the molecular machine that unwinds template DNA during replication, and around which the replisome is built. The active ATPase sites in the MCM2-7 ring are formed through the interaction surfaces of two neighboring subunits such that a critical structure of a conserved arginine finger motif is provided in trans relative to the ATP-binding site of the Walker A box of the adjacent subunit. The six ATPase active sites, however, are likely to contribute differentially to the complex helicase activity. The sequence is that of DNA replication licensing factor MCM6 (Mcm6) from Rattus norvegicus (Rat).